A 250-amino-acid chain; its full sequence is ATP synthase subunit a (250 aa).

Transmembrane regions (helical) follow at residues 26–46 (FTNASLFMVATVGAAAGFLYL), 84–104 (FFPMVFSLFMFILTANLLGMV), 114–134 (IIVTFALAVFVIGTVLLYGFY), 143–163 (LFVPQGVPGALLPLVVAIEII), 193–213 (FVASLSAFGALGIGGAILPLI), and 216–236 (VALTGLEFLVAFLQAYVFAVL).

The protein belongs to the ATPase A chain family. F-type ATPases have 2 components, CF(1) - the catalytic core - and CF(0) - the membrane proton channel. CF(1) has five subunits: alpha(3), beta(3), gamma(1), delta(1), epsilon(1). CF(0) has three main subunits: a(1), b(2) and c(9-12). The alpha and beta chains form an alternating ring which encloses part of the gamma chain. CF(1) is attached to CF(0) by a central stalk formed by the gamma and epsilon chains, while a peripheral stalk is formed by the delta and b chains.

Its subcellular location is the cell inner membrane. Key component of the proton channel; it plays a direct role in the translocation of protons across the membrane. The polypeptide is ATP synthase subunit a (Rhizobium meliloti (strain 1021) (Ensifer meliloti)).